We begin with the raw amino-acid sequence, 1020 residues long: Protein CLASP-2 (1020 aa).

A compositionally biased stretch (low complexity) spans 259–271 (ASDAASSSTSINS). Disordered regions lie at residues 259-280 (ASDA…PFRS), 329-387 (PMTT…RPSA), and 419-461 (LQKA…ALDT). The span at 329–343 (PMTTRTLSKIDTSPG) shows a compositional bias: polar residues. Low complexity predominate over residues 372 to 381 (SQPGSRNGSP). The span at 450–460 (QKATPQKSALD) shows a compositional bias: polar residues. The stretch at 954-992 (LAPCVIKSYDSPSSAVRKTAVYCLVAMVNKLGMKTMEPH) is one HEAT repeat.

Belongs to the CLASP family. Interacts with hcp-1 and hcp-2.

The protein localises to the cytoplasm. It localises to the cytoskeleton. The protein resides in the microtubule organizing center. Its subcellular location is the centrosome. It is found in the chromosome. The protein localises to the centromere. It localises to the kinetochore. The protein resides in the spindle. Probable microtubule plus-end tracking protein that promotes the stabilization of dynamic microtubules. Required for the formation of mitotic and meiotic spindles. Specifically promotes the polymerization of kinetochore-bound microtubules. Also required for cytoplasmic streaming. Essential for embryonic development. This is Protein CLASP-2 (cls-2) from Caenorhabditis elegans.